The following is a 565-amino-acid chain: Atlastin-2 (565 aa).

The Cytoplasmic segment spans residues 1 to 458 (MVLKKGVKFF…NIFYAARTPA (458 aa)). The GB1/RHD3-type G domain occupies 73–318 (DLNIVVVSVA…LVPLLLAPEN (246 aa)). GDP is bound by residues Arg-86, Lys-87, Gly-88, Lys-89, Ser-90, Phe-91, Gln-157, Arg-226, and Asp-227. GTP-binding residues include Arg-86, Lys-87, Gly-88, Lys-89, Ser-90, and Phe-91. Ser-90 lines the Mg(2+) pocket. 2 residues coordinate GTP: Arg-226 and Asp-227. Residues 238 to 266 (LEGGKQFLEKRLQVKKNQHEELQNVRKHI) adopt a coiled-coil conformation. N6-methyllysine is present on Lys-252. The GDP site is built by Val-285 and Asn-288. Val-285 lines the GTP pocket. A 3HB (three-helix bundle) domain region spans residues 356–447 (MLQATAEANN…YANFIKHNDG (92 aa)). The interval 448–456 (KNIFYAART) is linker. Residues 459 to 479 (TLFAVMFAMYIISGLTGFIGL) traverse the membrane as a helical segment. The Lumenal segment spans residues 480-481 (NS). A helical membrane pass occupies residues 482–502 (IAVLCNLVMGLALTFLCTWAY). Residues 503-565 (VKYSGEFREI…VSHHARLKTD (63 aa)) are Cytoplasmic-facing. Residues 529–565 (KPLGDNLMEENIRQSVTNSIKAGLTDQVSHHARLKTD) are autoinhibitory domain.

Belongs to the TRAFAC class dynamin-like GTPase superfamily. GB1/RHD3 GTPase family. GB1 subfamily. As to quaternary structure, monomeric and homodimeric. The homodimer, transiently formed by two molecules on opposing membranes, is the active form mediating ER membrane fusion. Interacts with REEP5 and RTN3; these proteins are involved in endoplasmic reticulum tubular network organization. Interacts with ZFYVE27; both proteins are involved in endoplasmic reticulum tubular network organization.

The protein localises to the endoplasmic reticulum membrane. It carries out the reaction GTP + H2O = GDP + phosphate + H(+). Functionally, atlastin-2 (ATL2) is a membrane-anchored GTPase that mediates the GTP-dependent fusion of endoplasmic reticulum (ER) membranes, maintaining the continuous ER network. It facilitates the formation of three-way junctions where ER tubules intersect. Two atlastin-2 on neighboring ER tubules bind GTP and form loose homodimers through the GB1/RHD3-type G domains and 3HB regions. Upon GTP hydrolysis, the 3HB regions tighten, pulling the membranes together to drive their fusion. After fusion, the homodimer disassembles upon release of inorganic phosphate (Pi). Subsequently, GDP dissociates, resetting the monomers to a conformation ready for a new fusion cycle. This is Atlastin-2 from Macaca fascicularis (Crab-eating macaque).